Consider the following 358-residue polypeptide: Alpha-2-HS-glycoprotein (358 aa).

An N-terminal signal peptide occupies residues 1–18 (MKFFVLFLCLVQLWGCHS). Residues 27-133 (ERNPACDDPE…QFSVVFAKCE (107 aa)) form the Cystatin fetuin-A-type 1 domain. 6 disulfides stabilise this stretch: Cys-32/Cys-349, Cys-89/Cys-100, Cys-114/Cys-132, Cys-146/Cys-149, Cys-208/Cys-218, and Cys-229/Cys-246. Asn-99 carries an N-linked (GlcNAc...) asparagine glycan. Position 134 is a phosphoserine (Ser-134). Residue Thr-135 is modified to Phosphothreonine. Ser-138 carries the post-translational modification Phosphoserine. The region spanning 144 to 254 (KVCPQCPLLT…TCTVFPTQPV (111 aa)) is the Cystatin fetuin-A-type 2 domain. Asn-156 and Asn-176 each carry an N-linked (GlcNAc...) asparagine glycan. The interval 257-288 (LPQPDAASSANPPPAADPAVSPPSSPSVPVDS) is disordered. Residues 267–282 (NPPPAADPAVSPPSSP) show a composition bias toward pro residues. Phosphoserine occurs at positions 318 and 320. Positions 320 to 350 (SGEAFGPRQKPKVTHPGVASGVGPVPPPPCP) are disordered.

Belongs to the fetuin family. In terms of processing, phosphorylated by FAM20C in the extracellular medium. In terms of tissue distribution, bone marrow.

The protein localises to the secreted. This is Alpha-2-HS-glycoprotein (AHSG) from Cavia porcellus (Guinea pig).